The primary structure comprises 142 residues: Endoribonuclease YbeY (142 aa).

Positions 107, 111, and 117 each coordinate Zn(2+).

This sequence belongs to the endoribonuclease YbeY family. Zn(2+) serves as cofactor.

It is found in the cytoplasm. Functionally, single strand-specific metallo-endoribonuclease involved in late-stage 70S ribosome quality control and in maturation of the 3' terminus of the 16S rRNA. This chain is Endoribonuclease YbeY, found in Parabacteroides distasonis (strain ATCC 8503 / DSM 20701 / CIP 104284 / JCM 5825 / NCTC 11152).